A 99-amino-acid polypeptide reads, in one-letter code: uncharacterized protein (99 aa).

A coiled-coil region spans residues 43-95; that stretch reads ENEEIYADQVRRIKLRLRELRETYATSEDNWRELMDNLEELRDQIERLAIRGG.

This is an uncharacterized protein from Archaeoglobus fulgidus (strain ATCC 49558 / DSM 4304 / JCM 9628 / NBRC 100126 / VC-16).